A 923-amino-acid polypeptide reads, in one-letter code: Immunomodulating metalloprotease (923 aa).

Residues 1 to 41 (MSLSTTAFPSLQGENMSRSPIPRHRALLAGFCLAGALSAQA) form the signal peptide. Residues 450–794 (QGFTAIGRMA…FYTQWVHYWA (345 aa)) enclose the Peptidase M60 domain. A Zn(2+)-binding site is contributed by histidine 696. Glutamate 697 is a catalytic residue. Histidine 700 contacts Zn(2+).

Belongs to the peptidase M88 family. The cofactor is Zn(2+).

The protein resides in the secreted. Its activity is regulated as follows. Proteolytic activity is blocked in the presence of EDTA. Protease that degrades several proteins of the host immune system. Cleaves P-selectin glycoprotein ligand-1 (PSGL-1), leading to its functional inhibition; PSGL-1 is a leukocyte cell-surface receptor essential for leukocyte recruitment to the site of infection. Next to PSGL-1, targets host CD43 and CD44 that are also involved in leukocyte homing. Thus, prevents neutrophil extravasation and thereby protects P.aeruginosa from neutrophil attack. Is also able to inhibit the decay accelerating factor (CD55), but not the cell-surface receptors CD46 and CD31. The protein is Immunomodulating metalloprotease of Pseudomonas aeruginosa (strain ATCC 15692 / DSM 22644 / CIP 104116 / JCM 14847 / LMG 12228 / 1C / PRS 101 / PAO1).